The sequence spans 416 residues: Multifunctional CCA protein (416 aa).

Residues glycine 8 and arginine 11 each contribute to the ATP site. CTP-binding residues include glycine 8 and arginine 11. 2 residues coordinate Mg(2+): aspartate 21 and aspartate 23. 3 residues coordinate ATP: arginine 91, arginine 138, and arginine 141. Residues arginine 91, arginine 138, and arginine 141 each contribute to the CTP site. Residues threonine 229–phenylalanine 331 form the HD domain.

This sequence belongs to the tRNA nucleotidyltransferase/poly(A) polymerase family. Bacterial CCA-adding enzyme type 1 subfamily. As to quaternary structure, monomer. Can also form homodimers and oligomers. The cofactor is Mg(2+). Requires Ni(2+) as cofactor.

It carries out the reaction a tRNA precursor + 2 CTP + ATP = a tRNA with a 3' CCA end + 3 diphosphate. The catalysed reaction is a tRNA with a 3' CCA end + 2 CTP + ATP = a tRNA with a 3' CCACCA end + 3 diphosphate. In terms of biological role, catalyzes the addition and repair of the essential 3'-terminal CCA sequence in tRNAs without using a nucleic acid template. Adds these three nucleotides in the order of C, C, and A to the tRNA nucleotide-73, using CTP and ATP as substrates and producing inorganic pyrophosphate. tRNA 3'-terminal CCA addition is required both for tRNA processing and repair. Also involved in tRNA surveillance by mediating tandem CCA addition to generate a CCACCA at the 3' terminus of unstable tRNAs. While stable tRNAs receive only 3'-terminal CCA, unstable tRNAs are marked with CCACCA and rapidly degraded. The polypeptide is Multifunctional CCA protein (Xylella fastidiosa (strain 9a5c)).